We begin with the raw amino-acid sequence, 78 residues long: Acyl carrier protein (78 aa).

A Carrier domain is found at 2 to 77; the sequence is SDIAERVKKI…DAIKFLEKNA (76 aa). Ser-37 bears the O-(pantetheine 4'-phosphoryl)serine mark.

This sequence belongs to the acyl carrier protein (ACP) family. 4'-phosphopantetheine is transferred from CoA to a specific serine of apo-ACP by AcpS. This modification is essential for activity because fatty acids are bound in thioester linkage to the sulfhydryl of the prosthetic group.

It localises to the cytoplasm. It participates in lipid metabolism; fatty acid biosynthesis. Functionally, carrier of the growing fatty acid chain in fatty acid biosynthesis. The sequence is that of Acyl carrier protein from Xanthobacter autotrophicus (strain ATCC BAA-1158 / Py2).